The chain runs to 211 residues: Suppressor of cytokine signaling 1 (211 aa).

Residues 1-53 form a disordered region; sequence MVAHNQVAADNAVSTAAEPRRRPEPSSSSSSSPAAPARPRPCPAVPAPAPGDT. Residues 25–35 are compositionally biased toward low complexity; the sequence is PSSSSSSSPAA. Pro residues predominate over residues 36-49; the sequence is PARPRPCPAVPAPA. A kinase inhibitory region (KIR) region spans residues 55-66; it reads FRTFRSHADYRR. Residues 67–78 are extended SH2 subdomain (ESS); that stretch reads ITRASALLDACG. Residues 79–174 form the SH2 domain; the sequence is FYWGPLSVHG…PLRQRRVRPL (96 aa). The region spanning 161 to 210 is the SOCS box domain; the sequence is MLGAPLRQRRVRPLQELCRQRIVATVGRENLARIPLNPVLRDYLSSFPFQ. Positions 173–182 are interaction with Elongin BC complex; that stretch reads PLQELCRQRI.

The protein belongs to the SOCS1 family. In terms of assembly, interacts with multiple activated signaling proteins of the tyrosine kinase signaling pathway including JAK family kinases, TEC, KIT, GRB2 and VAV. Binding to JAKs is mediated through the KIR and SH2 domains to a phosphorylated tyrosine residue within the JAK JH1 domain. Binds the SH3 domain of GRB2 via diproline determinants in the N-terminus, and the N-terminal regulatory domain of VAV. Interacts with the Elongin BC complex (ELOB and ELOC). Component of an ECS CBC(SOCS1) E3 ubiquitin-protein ligase complex which contains Elongin BC, CUL5, RBX1 and SOCS1. Interacts (via SH2 domain and SOCS box) with TRIM8. Interacts with AXL, CUL2 and FGFR3. Interacts with INSR. Interacts with TRIM8. Interacts with DCUN1D1. Interacts with IFNGR1. In terms of tissue distribution, expressed in all tissues with high expression in spleen, small intestine and peripheral blood leukocytes.

The protein resides in the nucleus. It localises to the cytoplasmic vesicle. It functions in the pathway protein modification; protein ubiquitination. Functionally, essential negative regulator of type I and type II interferon (IFN) signaling, as well as that of other cytokines, including IL2, IL4, IL6 and leukemia inhibitory factor (LIF). Downregulates cytokine signaling by inhibiting the JAK/STAT signaling pathway. Acts by binding to JAK proteins and to IFNGR1 and inhibiting their kinase activity. In vitro, suppresses Tec protein-tyrosine activity. Regulates IFN-gamma (IFNG)-mediated sensory neuron survival. Probable substrate recognition component of an ECS (Elongin BC-CUL2/5-SOCS-box protein) E3 ubiquitin ligase complex which mediates the ubiquitination and subsequent proteasomal degradation of target proteins. The sequence is that of Suppressor of cytokine signaling 1 (SOCS1) from Homo sapiens (Human).